A 586-amino-acid polypeptide reads, in one-letter code: Eukaryotic translation initiation factor 3 subunit D (586 aa).

Disordered regions lie at residues 16–37 (EDSWGPATPSDNMLEGVPYAPF) and 104–176 (KRTF…REPS). Over residues 108 to 131 (GRGGGTVFRGRAQRGGAGQRGGRA) the composition is skewed to gly residues. Residues 162–174 (GWKDYDKPQRTRE) are compositionally biased toward basic and acidic residues. Positions 301–315 (SIDLVTVNENAADAP) are RNA gate. The interval 563–586 (ANTFEEDDEAADEQEEKATEESEE) is disordered. Positions 566–577 (FEEDDEAADEQE) are enriched in acidic residues.

The protein belongs to the eIF-3 subunit D family. As to quaternary structure, component of the eukaryotic translation initiation factor 3 (eIF-3) complex.

It is found in the cytoplasm. MRNA cap-binding component of the eukaryotic translation initiation factor 3 (eIF-3) complex, which is involved in protein synthesis of a specialized repertoire of mRNAs and, together with other initiation factors, stimulates binding of mRNA and methionyl-tRNAi to the 40S ribosome. The eIF-3 complex specifically targets and initiates translation of a subset of mRNAs involved in cell proliferation. In the eIF-3 complex, eif3d specifically recognizes and binds the 7-methylguanosine cap of a subset of mRNAs. This chain is Eukaryotic translation initiation factor 3 subunit D, found in Aspergillus clavatus (strain ATCC 1007 / CBS 513.65 / DSM 816 / NCTC 3887 / NRRL 1 / QM 1276 / 107).